The primary structure comprises 184 residues: MSWRSESIWIEFITGSRKTSNFCWAFILFLGSLGFLLVGTSSYLGRNVISLFPSQQIIFFPQGIVMSFYGIAGLFISCYLWCTILWNVGSGYDLFDRKEGIVRIFRWGFPGKTRRIFLRFFMKDIQSIRIEVKEGVSARRVLYMEIRGQGAIPLIRTDENFTTREIEQKAAELAYFLRVPIEVF.

Helical transmembrane passes span 22–42 (FCWA…GTSS) and 57–77 (IIFF…LFIS).

Belongs to the Ycf4 family.

It is found in the plastid. The protein resides in the chloroplast thylakoid membrane. In terms of biological role, seems to be required for the assembly of the photosystem I complex. The chain is Photosystem I assembly protein Ycf4 from Capsella bursa-pastoris (Shepherd's purse).